The sequence spans 292 residues: Elongation factor Ts (292 aa).

Positions 80-83 (TDFV) are involved in Mg(2+) ion dislocation from EF-Tu.

This sequence belongs to the EF-Ts family.

The protein localises to the cytoplasm. Associates with the EF-Tu.GDP complex and induces the exchange of GDP to GTP. It remains bound to the aminoacyl-tRNA.EF-Tu.GTP complex up to the GTP hydrolysis stage on the ribosome. This Cupriavidus metallidurans (strain ATCC 43123 / DSM 2839 / NBRC 102507 / CH34) (Ralstonia metallidurans) protein is Elongation factor Ts.